The primary structure comprises 260 residues: Flap endonuclease Xni (260 aa).

Asp-112 provides a ligand contact to Mg(2+). Positions 168–258 constitute a 5'-3' exonuclease domain; the sequence is LQPSQLVDFW…FNLKDLRYTP (91 aa). Leu-179, Val-190, and Ile-193 together coordinate K(+). Residues 192–197 form an interaction with DNA region; the sequence is GIGEKT.

It belongs to the Xni family. It depends on Mg(2+) as a cofactor. K(+) is required as a cofactor.

Has flap endonuclease activity. During DNA replication, flap endonucleases cleave the 5'-overhanging flap structure that is generated by displacement synthesis when DNA polymerase encounters the 5'-end of a downstream Okazaki fragment. The polypeptide is Flap endonuclease Xni (Tolumonas auensis (strain DSM 9187 / NBRC 110442 / TA 4)).